The primary structure comprises 21 residues: Helicopsin (21 aa).

Belongs to the CRISP family. Contains 8 disulfide bonds. Expressed by the salivary gland.

The protein resides in the secreted. Its function is as follows. Helicopsin exhibits robust neurotoxic activity as shown by immediate death (about 8 minutes) of mice due to respiratory paralysis. The chain is Helicopsin from Helicops angulatus (South American water snake).